Here is a 288-residue protein sequence, read N- to C-terminus: Proteasome assembly chaperone 1 (288 aa).

N-acetylalanine is present on Ala-2. The interval 13–35 (PCRAGTEDEEEEEEGRRETPEDR) is disordered. Phosphothreonine is present on Thr-18. Basic and acidic residues predominate over residues 26-35 (EGRRETPEDR). At Thr-54 the chain carries Phosphothreonine. Position 180 is a phosphoserine (Ser-180). N6-acetyllysine is present on Lys-264.

The protein belongs to the PSMG1 family. In terms of assembly, forms a heterodimer with PSMG2. The PSMG1-PSMG2 heterodimer interacts directly with the PSMA5 and PSMA7 proteasome alpha subunits. Degraded by the proteasome upon completion of 20S proteasome maturation. In terms of tissue distribution, in the adult, detected in brain, colon, leukocytes, breast and testis. Widely expressed in the fetus. Also expressed in a variety of proliferating cell lines.

Its subcellular location is the cytoplasm. The protein localises to the endoplasmic reticulum. Its function is as follows. Chaperone protein which promotes assembly of the 20S proteasome as part of a heterodimer with PSMG2. The PSMG1-PSMG2 heterodimer binds to the PSMA5 and PSMA7 proteasome subunits, promotes assembly of the proteasome alpha subunits into the heteroheptameric alpha ring and prevents alpha ring dimerization. This chain is Proteasome assembly chaperone 1, found in Homo sapiens (Human).